A 591-amino-acid polypeptide reads, in one-letter code: Eukaryotic translation initiation factor 3 subunit D (591 aa).

The interval 100–159 (SGGNPDEDAAFRLVDGKPPPRPKFGPKWRFNPHHNRNQLPQRRDEEVEAKKRDAEKERAR) is disordered. A compositionally biased stretch (basic residues) spans 123-135 (FGPKWRFNPHHNR). The span at 140–159 (QRRDEEVEAKKRDAEKERAR) shows a compositional bias: basic and acidic residues. Positions 309–323 (QLDLLSVHETSQEPL) are RNA gate. A compositionally biased stretch (acidic residues) spans 549 to 560 (DYVEEPLPEDEQ). The tract at residues 549 to 591 (DYVEEPLPEDEQVQPTEENTEGAEASVAATKETEEKKADDAQA) is disordered. The span at 579–591 (KETEEKKADDAQA) shows a compositional bias: basic and acidic residues.

It belongs to the eIF-3 subunit D family. Component of the eukaryotic translation initiation factor 3 (eIF-3) complex, which is composed of at least 13 different subunits.

It localises to the cytoplasm. MRNA cap-binding component of the eukaryotic translation initiation factor 3 (eIF-3) complex, which is involved in protein synthesis of a specialized repertoire of mRNAs and, together with other initiation factors, stimulates binding of mRNA and methionyl-tRNAi to the 40S ribosome. The eIF-3 complex specifically targets and initiates translation of a subset of mRNAs involved in cell proliferation. In the eIF-3 complex, eif3d specifically recognizes and binds the 7-methylguanosine cap of a subset of mRNAs. The chain is Eukaryotic translation initiation factor 3 subunit D (TIF3D1) from Arabidopsis thaliana (Mouse-ear cress).